Consider the following 345-residue polypeptide: N-acetyl-gamma-glutamyl-phosphate reductase (345 aa).

Residue C153 is part of the active site.

This sequence belongs to the NAGSA dehydrogenase family. Type 1 subfamily.

It is found in the cytoplasm. It carries out the reaction N-acetyl-L-glutamate 5-semialdehyde + phosphate + NADP(+) = N-acetyl-L-glutamyl 5-phosphate + NADPH + H(+). The protein operates within amino-acid biosynthesis; L-arginine biosynthesis; N(2)-acetyl-L-ornithine from L-glutamate: step 3/4. Its function is as follows. Catalyzes the NADPH-dependent reduction of N-acetyl-5-glutamyl phosphate to yield N-acetyl-L-glutamate 5-semialdehyde. The protein is N-acetyl-gamma-glutamyl-phosphate reductase of Methylacidiphilum infernorum (isolate V4) (Methylokorus infernorum (strain V4)).